The chain runs to 53 residues: Zinc metalloproteinase-disintegrin-like alborhagin (53 aa).

Belongs to the venom metalloproteinase (M12B) family. P-III subfamily. P-IIIb sub-subfamily. In terms of assembly, monomer. Zn(2+) is required as a cofactor. Post-translationally, contains numerous disulfide bonds. In terms of processing, glycosylated. As to expression, expressed by the venom gland.

Its subcellular location is the secreted. With respect to regulation, alborhagin-induced platelet aggregation, but not shape change, is inhibited by EDTA, suggesting that the platelet activation (shape change) is independent of divalent cation or metalloproteinase activity. Induces platelet activation and glycoprotein VI (GP6)-dependent platelet aggregation. Induces ectodomain cleavage of GP6 by activating endogenous platelet metalloproteinases (probably ADAM10). Has fibrinogenolytic activity against the alpha chain of fibrinogen (FGA). Recognizes distinct binding sites as convulxin, since alborhagin has minimal effect on convulxin binding to GPVI-expressing cells. In terms of biological role, disintegrin alborhagin-C: 42 kDa fragment of alborhagin autoproteolysed that does not show platelet activation. The polypeptide is Zinc metalloproteinase-disintegrin-like alborhagin (Trimeresurus albolabris (White-lipped pit viper)).